The chain runs to 536 residues: Proto-oncogene tyrosine-protein kinase Src (536 aa).

The tract at residues 1 to 53 (MGSNKSKPKDASQRRRSLEPAENVHGAGGGAFPASQTPSKPASADGHRGPSAA) is disordered. Residue glycine 2 is the site of N-myristoyl glycine attachment. Basic and acidic residues predominate over residues 7-19 (KPKDASQRRRSLE). Serine 17 is subject to Phosphoserine. Serine 75 bears the Phosphoserine; by CDK5 mark. The region spanning 84 to 145 (GGVTTFVALY…PSNYVAPSDS (62 aa)) is the SH3 domain. Positions 151 to 248 (WYFGKITRRE…GLCHRLTTVC (98 aa)) constitute an SH2 domain. Tyrosine 187 carries the phosphotyrosine modification. Positions 270–523 (LRLEVKLGQG…YLQAFLEDYF (254 aa)) constitute a Protein kinase domain. Residues 276 to 284 (LGQGCFGEV) and lysine 298 each bind ATP. The Proton acceptor role is filled by aspartate 389. Tyrosine 419 is modified (phosphotyrosine; by autocatalysis). Tyrosine 419 bears the Phosphotyrosine; by FAK2 mark. Tyrosine 530 is modified (phosphotyrosine; by CSK).

The protein belongs to the protein kinase superfamily. Tyr protein kinase family. SRC subfamily. As to quaternary structure, part of a complex comprised of PTPRA, BCAR1, BCAR3 (via SH2 domain) and SRC; the formation of the complex is dependent on integrin mediated-tyrosine phosphorylation of PTPRA. Interacts with DDEF1/ASAP1; via the SH3 domain. Interacts with CCPG1. Identified in a complex containing FGFR4, NCAM1, CDH2, PLCG1, FRS2, SRC, SHC1, GAP43 and CTTN. Interacts with ERBB2, STAT1 and PNN. Interacts with DDR1, DDR2 and DAB2. Interacts with CDCP1, TGFB1I1 and TOM1L2. Interacts with the cytoplasmic domain of MUC1, phosphorylates it and increases binding of MUC1 with beta-catenin. Interacts with RALGPS1; via the SH3 domain. Interacts with CAV2 (tyrosine phosphorylated form). Interacts (via the SH3 domain and the protein kinase domain) with ARRB1; the interaction is independent of the phosphorylation state of SRC C-terminus. Interacts with ARRB1 and ARRB2. Interacts with SRCIN1. Interacts with NDFIP2 and more weakly with NDFIP1. Interacts with PIK3CA and/or PIK3C2B, PTK2/FAK1 and ESR1 (dimethylated on arginine). Interacts with FASLG. Interacts (via SH2 domain) with the 'Tyr-402' phosphorylated form of PTK2B/PYK2. Interacts (via SH2 domain) with FLT3 (tyrosine phosphorylated). Interacts with PDGFRA (tyrosine phosphorylated). Interacts with CSF1R. Interacts (via SH2 and SH3 domain) with TNK2. Interacts (via protein kinase domain) with the tyrosine phosphorylated form of RUNX3 (via runt domain). Interacts with TRAF3 (via RING-type zinc finger domain). Interacts with RIGI, MAVS and TBK1. Interacts (via SH2 domain) with RACK1; the interaction is enhanced by tyrosine phosphorylation of RACK1 and inhibits SRC activity. Interacts with EPHB1; activates the MAPK/ERK cascade to regulate cell migration. Interacts with FCAMR. Interacts (via SH2 domain) with the 'Tyr-9' phosphorylated form of PDPK1. Interacts with AMOTL2; this interaction regulates the translocation of phosphorylated SRC to peripheral cell-matrix adhesion sites. Interacts with TRAP1. Interacts with CBLC; the interaction is enhanced when SRC is phosphorylated at Tyr-419. Interacts with ARHGEF5. Interacts (via cytoplasmic domain) with CEACAM1 (via SH2 domain); this interaction is regulated by trans-homophilic cell adhesion. Interacts with MPP2. Interacts with PRR7. Interacts (via kinase domain and to a lesser extent the SH2 domain) directly with PDLIM4; this interaction results in PTPN13-mediated dephosphorylation of this protein leading to its inactivation. Interacts with P85 (PIK3R1 or PIK3R2). Interacts with HNRNPA2B1. Interacts with IL6ST/gp130. Interacts (via SH3 domain) with PELP1 in the presence of 17-beta-estradiol. Interacts with AMBRA1. (Microbial infection) Interacts with HEV ORF3 protein; via the SH3 domain. In terms of assembly, (Microbial infection) Interacts (via SH2 domain) with HCV non-structural protein 5A (via N-terminus). In terms of processing, myristoylated at Gly-2, and this is essential for targeting to membranes. Dephosphorylated at Tyr-530 by PTPRJ. Phosphorylated on Tyr-530 by c-Src kinase (CSK). The phosphorylated form is termed pp60c-src. Dephosphorylated by PTPRJ at Tyr-419. Normally maintained in an inactive conformation with the SH2 domain engaged with Tyr-530, the SH3 domain engaged with the SH2-kinase linker, and Tyr-419 dephosphorylated. Dephosphorylation of Tyr-530 as a result of protein tyrosine phosphatase (PTP) action disrupts the intramolecular interaction between the SH2 domain and Tyr-530, Tyr-419 can then become autophosphorylated, resulting in SRC activation. Phosphorylation of Tyr-530 by CSK allows this interaction to reform, resulting in SRC inactivation. CDK5-mediated phosphorylation at Ser-75 targets SRC to ubiquitin-dependent degradation and thus leads to cytoskeletal reorganization. Phosphorylated by PTK2/FAK1; this enhances kinase activity. Phosphorylated by PTK2B/PYK2; this enhances kinase activity. Upon activation of IL6ST by IL6, Tyr-419 is phosphorylated and Tyr-530 dephosphorylated. Post-translationally, displays reduced levels of autophosphorylation at Tyr-419 compared to isoforms 2 and 3. In terms of processing, displays enhanced levels of autophosphorylation at Tyr-419 compared to isoform 1. Displays enhanced levels of autophosphorylation at Tyr-419 compared to isoform 1. Shows reduced phosphorylation at Tyr-527 compared to isoforms 1 and 2. Post-translationally, S-nitrosylation is important for activation of its kinase activity. In terms of processing, ubiquitinated in response to CDK5-mediated phosphorylation. Ubiquitination mediated by CBLC requires SRC autophosphorylation at Tyr-419 and may lead to lysosomal degradation. Expressed ubiquitously. Expressed in the skin (at protein level). Platelets, neurons and osteoclasts express 5-fold to 200-fold higher levels than most other tissues. As to expression, expressed in spleen and liver. In terms of tissue distribution, expressed in brain.

The protein resides in the cell membrane. The protein localises to the mitochondrion inner membrane. It localises to the nucleus. It is found in the cytoplasm. Its subcellular location is the cytoskeleton. The protein resides in the perinuclear region. The protein localises to the cell junction. It localises to the focal adhesion. It catalyses the reaction L-tyrosyl-[protein] + ATP = O-phospho-L-tyrosyl-[protein] + ADP + H(+). With respect to regulation, phosphorylation by CSK at Tyr-530 inhibits kinase activity. Inhibitory phosphorylation at Tyr-530 is enhanced by heme. Further phosphorylation by CDK1 partially reactivates CSK-inactivated SRC and facilitates complete reactivation by protein tyrosine phosphatase PTPRC. Integrin engagement stimulates kinase activity. Phosphorylation by PTK2/FAK1 enhances kinase activity. Butein and pseudosubstrate-based peptide inhibitors like CIYKYYF act as inhibitors. Phosphorylation at Tyr-419 increases kinase activity. Non-receptor protein tyrosine kinase which is activated following engagement of many different classes of cellular receptors including immune response receptors, integrins and other adhesion receptors, receptor protein tyrosine kinases, G protein-coupled receptors as well as cytokine receptors. Participates in signaling pathways that control a diverse spectrum of biological activities including gene transcription, immune response, cell adhesion, cell cycle progression, apoptosis, migration, and transformation. Due to functional redundancy between members of the SRC kinase family, identification of the specific role of each SRC kinase is very difficult. SRC appears to be one of the primary kinases activated following engagement of receptors and plays a role in the activation of other protein tyrosine kinase (PTK) families. Receptor clustering or dimerization leads to recruitment of SRC to the receptor complexes where it phosphorylates the tyrosine residues within the receptor cytoplasmic domains. Plays an important role in the regulation of cytoskeletal organization through phosphorylation of specific substrates such as AFAP1. Phosphorylation of AFAP1 allows the SRC SH2 domain to bind AFAP1 and to localize to actin filaments. Cytoskeletal reorganization is also controlled through the phosphorylation of cortactin (CTTN). When cells adhere via focal adhesions to the extracellular matrix, signals are transmitted by integrins into the cell resulting in tyrosine phosphorylation of a number of focal adhesion proteins, including PTK2/FAK1 and paxillin (PXN). In addition to phosphorylating focal adhesion proteins, SRC is also active at the sites of cell-cell contact adherens junctions and phosphorylates substrates such as beta-catenin (CTNNB1), delta-catenin (CTNND1), and plakoglobin (JUP). Another type of cell-cell junction, the gap junction, is also a target for SRC, which phosphorylates connexin-43 (GJA1). SRC is implicated in regulation of pre-mRNA-processing and phosphorylates RNA-binding proteins such as KHDRBS1. Phosphorylates PKP3 at 'Tyr-195' in response to reactive oxygen species, which may cause the release of PKP3 from desmosome cell junctions into the cytoplasm. Also plays a role in PDGF-mediated tyrosine phosphorylation of both STAT1 and STAT3, leading to increased DNA binding activity of these transcription factors. Involved in the RAS pathway through phosphorylation of RASA1 and RASGRF1. Plays a role in EGF-mediated calcium-activated chloride channel activation. Required for epidermal growth factor receptor (EGFR) internalization through phosphorylation of clathrin heavy chain (CLTC and CLTCL1) at 'Tyr-1477'. Involved in beta-arrestin (ARRB1 and ARRB2) desensitization through phosphorylation and activation of GRK2, leading to beta-arrestin phosphorylation and internalization. Has a critical role in the stimulation of the CDK20/MAPK3 mitogen-activated protein kinase cascade by epidermal growth factor. Might be involved not only in mediating the transduction of mitogenic signals at the level of the plasma membrane but also in controlling progression through the cell cycle via interaction with regulatory proteins in the nucleus. Plays an important role in osteoclastic bone resorption in conjunction with PTK2B/PYK2. Both the formation of a SRC-PTK2B/PYK2 complex and SRC kinase activity are necessary for this function. Recruited to activated integrins by PTK2B/PYK2, thereby phosphorylating CBL, which in turn induces the activation and recruitment of phosphatidylinositol 3-kinase to the cell membrane in a signaling pathway that is critical for osteoclast function. Promotes energy production in osteoclasts by activating mitochondrial cytochrome C oxidase. Phosphorylates DDR2 on tyrosine residues, thereby promoting its subsequent autophosphorylation. Phosphorylates RUNX3 and COX2 on tyrosine residues, TNK2 on 'Tyr-284' and CBL on 'Tyr-731'. Enhances RIGI-elicited antiviral signaling. Phosphorylates PDPK1 at 'Tyr-9', 'Tyr-373' and 'Tyr-376'. Phosphorylates BCAR1 at 'Tyr-128'. Phosphorylates CBLC at multiple tyrosine residues, phosphorylation at 'Tyr-341' activates CBLC E3 activity. Phosphorylates synaptic vesicle protein synaptophysin (SYP). Involved in anchorage-independent cell growth. Required for podosome formation. Mediates IL6 signaling by activating YAP1-NOTCH pathway to induce inflammation-induced epithelial regeneration. Phosphorylates OTUB1, promoting deubiquitination of RPTOR. Phosphorylates caspase CASP8 at 'Tyr-380' which negatively regulates CASP8 processing and activation, down-regulating CASP8 proapoptotic function. Its function is as follows. Non-receptor protein tyrosine kinase which phosphorylates synaptophysin with high affinity. In terms of biological role, non-receptor protein tyrosine kinase which shows higher basal kinase activity than isoform 1, possibly due to weakened intramolecular interactions which enhance autophosphorylation of Tyr-419 and subsequent activation. The SH3 domain shows reduced affinity with the linker sequence between the SH2 and kinase domains which may account for the increased basal activity. Displays altered substrate specificity compared to isoform 1, showing weak affinity for synaptophysin and for peptide substrates containing class I or class II SH3 domain-binding motifs. Plays a role in L1CAM-mediated neurite elongation, possibly by acting downstream of L1CAM to drive cytoskeletal rearrangements involved in neurite outgrowth. Functionally, non-receptor protein tyrosine kinase which shows higher basal kinase activity than isoform 1, possibly due to weakened intramolecular interactions which enhance autophosphorylation of Tyr-419 and subsequent activation. The SH3 domain shows reduced affinity with the linker sequence between the SH2 and kinase domains which may account for the increased basal activity. Displays altered substrate specificity compared to isoform 1, showing weak affinity for synaptophysin and for peptide substrates containing class I or class II SH3 domain-binding motifs. Plays a role in neurite elongation. In Homo sapiens (Human), this protein is Proto-oncogene tyrosine-protein kinase Src.